The chain runs to 141 residues: Large ribosomal subunit protein uL11 (141 aa).

The protein belongs to the universal ribosomal protein uL11 family. Part of the ribosomal stalk of the 50S ribosomal subunit. Interacts with L10 and the large rRNA to form the base of the stalk. L10 forms an elongated spine to which L12 dimers bind in a sequential fashion forming a multimeric L10(L12)X complex. One or more lysine residues are methylated.

Its function is as follows. Forms part of the ribosomal stalk which helps the ribosome interact with GTP-bound translation factors. The protein is Large ribosomal subunit protein uL11 of Synechococcus sp. (strain RCC307).